A 48-amino-acid chain; its full sequence is uncharacterized protein (48 aa).

The protein belongs to the ELIP/psbS family.

It is found in the plastid. It localises to the chloroplast. Its function is as follows. Possible role in chlorophyll and/or carotenoid binding. This is an uncharacterized protein from Pyropia yezoensis (Susabi-nori).